The sequence spans 369 residues: Gap junction alpha-5 protein (369 aa).

Residues 2–19 lie on the Cytoplasmic side of the membrane; the sequence is GDWSFLGEFLEEVHKHST. A helical membrane pass occupies residues 20-40; that stretch reads VVGKVWLTVLFIFRMLVLGTA. Residues 41-76 are Extracellular-facing; that stretch reads AGPLWGDEQSDFMCDTQQPGCENVCYDKAFPISHVR. A helical membrane pass occupies residues 77–97; it reads FWVLQIIFVSTPSLVYMGHAM. The Cytoplasmic portion of the chain corresponds to 98 to 169; the sequence is HTVRMEEKRK…YSILIRTAME (72 aa). Residues 170–190 traverse the membrane as a helical segment; it reads IAFIVGQYILYGIFLETLYIC. The Extracellular segment spans residues 191-210; the sequence is QRAPCPHPVNCYVSRPTEKN. A helical transmembrane segment spans residues 211-231; that stretch reads VFIIFMLAVAVLSLFLSLAEL. Residues 232-369 are Cytoplasmic-facing; sequence YHLGWKKAKE…SKARSDDLSV (138 aa). The segment at 347-369 is disordered; it reads NEKRRFSKASRASSKARSDDLSV.

Belongs to the connexin family. Alpha-type (group II) subfamily. In terms of assembly, a connexon is composed of a hexamer of connexins. Mostly in heart, and in the whole embryo, liver, stomach, and pectoral muscle.

The protein resides in the cell membrane. Its subcellular location is the cell junction. It is found in the gap junction. In terms of biological role, one gap junction consists of a cluster of closely packed pairs of transmembrane channels, the connexons, through which materials of low MW diffuse from one cell to a neighboring cell. This chain is Gap junction alpha-5 protein (GJA5), found in Gallus gallus (Chicken).